A 674-amino-acid chain; its full sequence is Probable copper-transporting P-type ATPase B (674 aa).

The tract at residues 1 to 22 (MNHSNQMHHDNHESHNHHSGHA) is disordered. Over residues 7-16 (MHHDNHESHN) the composition is skewed to basic and acidic residues. Transmembrane regions (helical) follow at residues 32 to 52 (FFVSLIFAIPIILLSPLMGVN), 57 to 77 (FTFPGSEWVVLILSTILFFYG), 95 to 115 (GMMTLVALGISVAYIYSLYAF), 127 to 147 (TMDFFWELATLILIMLLGHWI), 284 to 304 (GYLFYFAVSVGVISFIVWMLI), and 315 to 335 (LVTVLVIACPHALGLAIPLVT). Catalysis depends on aspartate 367, which acts as the 4-aspartylphosphate intermediate. The Mg(2+) site is built by aspartate 565 and aspartate 569. The next 2 helical transmembrane spans lie at 623-645 (LWWGAGYNIVAVPLAAGILAFIG) and 649-671 (SPAIGAILMSLSTVIVAINAFTL).

The protein belongs to the cation transport ATPase (P-type) (TC 3.A.3) family. Type IB subfamily.

Its subcellular location is the cell membrane. The enzyme catalyses Cu(+)(in) + ATP + H2O = Cu(+)(out) + ADP + phosphate + H(+). Functionally, involved in copper transport. This chain is Probable copper-transporting P-type ATPase B (copB), found in Staphylococcus epidermidis (strain ATCC 35984 / DSM 28319 / BCRC 17069 / CCUG 31568 / BM 3577 / RP62A).